The sequence spans 129 residues: Prefoldin subunit 6 (129 aa).

Alanine 2 carries the post-translational modification N-acetylalanine. The residue at position 21 (lysine 21) is an N6-acetyllysine. N6-acetyllysine; alternate is present on lysine 66. A Glycyl lysine isopeptide (Lys-Gly) (interchain with G-Cter in SUMO1); alternate cross-link involves residue lysine 66. Lysine 66 is covalently cross-linked (Glycyl lysine isopeptide (Lys-Gly) (interchain with G-Cter in SUMO2); alternate).

The protein belongs to the prefoldin subunit beta family. As to quaternary structure, heterohexamer of two PFD-alpha type and four PFD-beta type subunits. Component of the PAQosome complex which is responsible for the biogenesis of several protein complexes and which consists of R2TP complex members RUVBL1, RUVBL2, RPAP3 and PIH1D1, URI complex members PFDN2, PFDN6, PDRG1, UXT and URI1 as well as ASDURF, POLR2E and DNAAF10/WDR92.

In terms of biological role, binds specifically to cytosolic chaperonin (c-CPN) and transfers target proteins to it. Binds to nascent polypeptide chain and promotes folding in an environment in which there are many competing pathways for nonnative proteins. This Canis lupus familiaris (Dog) protein is Prefoldin subunit 6 (PFDN6).